Here is a 277-residue protein sequence, read N- to C-terminus: Diaminopimelate epimerase (277 aa).

Substrate contacts are provided by Asn-13, Gln-46, and Asn-66. The active-site Proton donor is Cys-75. Residues 76-77 (GN), Asn-159, Asn-192, and 210-211 (ER) each bind substrate. Cys-219 (proton acceptor) is an active-site residue. 220–221 (GT) is a binding site for substrate.

This sequence belongs to the diaminopimelate epimerase family. In terms of assembly, homodimer.

The protein localises to the cytoplasm. It carries out the reaction (2S,6S)-2,6-diaminopimelate = meso-2,6-diaminopimelate. Its pathway is amino-acid biosynthesis; L-lysine biosynthesis via DAP pathway; DL-2,6-diaminopimelate from LL-2,6-diaminopimelate: step 1/1. Its function is as follows. Catalyzes the stereoinversion of LL-2,6-diaminopimelate (L,L-DAP) to meso-diaminopimelate (meso-DAP), a precursor of L-lysine and an essential component of the bacterial peptidoglycan. The protein is Diaminopimelate epimerase of Azoarcus sp. (strain BH72).